The following is a 2131-amino-acid chain: MTEDSDSISEEERSLFRPFTRESLVQIEQRIAAEHEKQKELERKRAEGEVPQYGRKKKQKEIRYDDEDEDEGPQPDPTLEQGVPIPVRLQGSFPPELASTPLEDIDPYYSNVLTFVVVSKGKDIFRFSASKAMWMLDPFNPIRRVAIYILVHPLFSLFIITTILVNCILMIMPTTPTVESTEVIFTGIYTFESAVKVMARGFILCPFTYLRDAWNWLDFVVIALAYVTMGIDLGNLAALRTFRVLRALKTVAIVPGLKTIVGAVIESVKNLRDVIILTMFSLSVFALMGLQIYMGVLTQKCIKKFPLDGSWGNLTDENWDYHNRNSSNWYSEDEGISFPLCGNISGAGQCDDDYVCLQGFGPNPNYGYTSFDSFGWAFLSAFRLMTQDFWEDLYQLVLRAAGPWHMLFFIVIIFLGSFYLVNLILAIVAMSYDELQKKAEEEEAAEEEAIREAEEAAAAKAAKLEERANAQAQAAADAAAAEEAALHPEMAKSPTYSCISYELFVGGEKGNDDNNKEKMSIRSVEVESESVSVIQRQPAPTTAHQATKVRKVSTTSLSLPGSPFNIRRGSRSSHKYTIRNGRGRFGIPGSDRKPLVLSTYQDAQQHLPYADDSNAVTPMSEENGAIIVPVYYGNLGSRHSSYTSHQSRISYTSHGDLLGGMAVMGVSTMTKESKLRNRNTRNQSVGATNGGTTCLDTNHKLDHRDYEIGLECTDEAGKIKHHDNPFIEPVQTQTVVDMKDVMVLNDIIEQAAGRHSRASDRGVSVYYFPTEDDDEDGPTFKDKALEVILKGIDVFCVWDCCWVWLKFQEWVSLIVFDPFVELFITLCIVVNTMFMAMDHHDMNKEMERVLKSGNYFFTATFAIEATMKLMAMSPKYYFQEGWNIFDFIIVALSLLELGLEGVQGLSVLRSFRLLRVFKLAKSWPTLNLLISIMGRTMGALGNLTFVLCIIIFIFAVMGMQLFGKNYHDHKDRFPDGDLPRWNFTDFMHSFMIVFRVLCGEWIESMWDCMYVGDVSCIPFFLATVVIGNLVVLNLFLALLLSNFGSSSLSAPTADNDTNKIAEAFNRIGRFKSWVKRNIADCFKLIRNKLTNQISDQPSGERTNQISWIWSEGKGVCRCISAEHGDNELELGHDEILADGLIKKGIKEQTQLEVAIGDGMEFTIHGDMKNNKPKKSKYLNNATDDDTASINSYGSHKNRPFKDESHKGSAETMEGEEKRDASKEDLGLDEELDEEGECEEGPLDGDIIIHAHDEDILDEYPADCCPDSYYKKFPILAGDDDSPFWQGWGNLRLKTFQLIENKYFETAVITMILMSSLALALEDVHLPQRPILQDILYYMDRIFTVIFFLEMLIKWLALGFKVYFTNAWCWLDFVIVMVSLINFVASLVGAGGIQAFKTMRTLRALRPLRAMSRMQGMRVVVNALVQAIPSIFNVLLVCLIFWLIFAIMGVQLFAGKYFKCEDMNGTKLSHEIIPNRNACESENYTWVNSAMNFDHVGNAYLCLFQVATFKGWIQIMNDAIDSREVDKQPIRETNIYMYLYFVFFIIFGSFFTLNLFIGVIIDNFNEQKKKAGGSLEMFMTEDQKKYYNAMKKMGSKKPLKAIPRPRWRPQAIVFEIVTDKKFDIIIMLFIGLNMFTMTLDRYDASDTYNAVLDYLNAIFVVIFSSECLLKIFALRYHYFIEPWNLFDVVVVILSILGLVLSDIIEKYFVSPTLLRVVRVAKVGRVLRLVKGAKGIRTLLFALAMSLPALFNICLLLFLVMFIFAIFGMSFFMHVKEKSGINDVYNFKTFGQSMILLFQMSTSAGWDGVLDAIINEEACDPPDNDKGYPGNCGSATVGITFLLSYLVISFLIVINMYIAVILENYSQATEDVQEGLTDDDYDMYYEIWQQFDPEGTQYIRYDQLSEFLDVLEPPLQIHKPNKYKIISMDIPICRGDLMYCVDILDALTKDFFARKGNPIEETGEIGEIAARPDTEGYEPVSSTLWRQREEYCARLIQHAWRKHKARGEGGGSFEPDTDHGDGGDPDAGDPAPDEATDGDAPAGGDGSVNGTAEGAADADESNVNSPGEDAAAAAAAAAAAAAAGTTTAGSPGAGSAGRQTAVLVESDGFVTKNGHKVVIHSRSPSITSRTADV.

Over 1–148 the chain is Cytoplasmic; the sequence is MTEDSDSISE…FNPIRRVAIY (148 aa). Basic and acidic residues predominate over residues 35–48; that stretch reads HEKQKELERKRAEG. Residues 35 to 84 form a disordered region; sequence HEKQKELERKRAEGEVPQYGRKKKQKEIRYDDEDEDEGPQPDPTLEQGVP. A compositionally biased stretch (acidic residues) spans 64-73; that stretch reads YDDEDEDEGP. One copy of the I repeat lies at 134–467; it reads WMLDPFNPIR…AAKAAKLEER (334 aa). Residues 149–172 traverse the membrane as a helical segment; the sequence is ILVHPLFSLFIITTILVNCILMIM. Topologically, residues 173-180 are extracellular; that stretch reads PTTPTVES. A helical membrane pass occupies residues 181–199; that stretch reads TEVIFTGIYTFESAVKVMA. Over 200–212 the chain is Cytoplasmic; the sequence is RGFILCPFTYLRD. The chain crosses the membrane as a helical span at residues 213–231; sequence AWNWLDFVVIALAYVTMGI. Residues 232 to 237 are Extracellular-facing; the sequence is DLGNLA. Residues 238–257 traverse the membrane as a helical; Voltage-sensor segment; it reads ALRTFRVLRALKTVAIVPGL. Topologically, residues 258 to 273 are cytoplasmic; the sequence is KTIVGAVIESVKNLRD. The chain crosses the membrane as a helical span at residues 274–297; it reads VIILTMFSLSVFALMGLQIYMGVL. Residues 298–373 are Extracellular-facing; it reads TQKCIKKFPL…PNYGYTSFDS (76 aa). The cysteines at positions 301 and 350 are disulfide-linked. 3 N-linked (GlcNAc...) asparagine glycosylation sites follow: Asn313, Asn325, and Asn343. The segment at residues 374-398 is an intramembrane region (pore-forming); the sequence is FGWAFLSAFRLMTQDFWEDLYQLVL. Topologically, residues 399–405 are extracellular; that stretch reads RAAGPWH. Residues 406 to 427 traverse the membrane as a helical segment; sequence MLFFIVIIFLGSFYLVNLILAI. Over 428–812 the chain is Cytoplasmic; sequence VAMSYDELQK…VWLKFQEWVS (385 aa). Phosphoserine; by PKA occurs at positions 553 and 570. Disordered stretches follow at residues 553–572 and 671–691; these read STTSLSLPGSPFNIRRGSRS and KESKLRNRNTRNQSVGATNGG. The span at 680 to 691 shows a compositional bias: polar residues; that stretch reads TRNQSVGATNGG. Residues 799-1069 form an II repeat; sequence DCCWVWLKFQ…IAEAFNRIGR (271 aa). A helical transmembrane segment spans residues 813-837; the sequence is LIVFDPFVELFITLCIVVNTMFMAM. Over 838–848 the chain is Extracellular; sequence DHHDMNKEMER. The helical transmembrane segment at 849-873 threads the bilayer; it reads VLKSGNYFFTATFAIEATMKLMAMS. Residues 874-880 are Cytoplasmic-facing; it reads PKYYFQE. A helical membrane pass occupies residues 881–900; sequence GWNIFDFIIVALSLLELGLE. The Extracellular portion of the chain corresponds to 901–906; it reads GVQGLS. Residues 907 to 926 traverse the membrane as a helical; Voltage-sensor segment; that stretch reads VLRSFRLLRVFKLAKSWPTL. The Cytoplasmic portion of the chain corresponds to 927-941; that stretch reads NLLISIMGRTMGALG. Residues 942–963 traverse the membrane as a helical segment; that stretch reads NLTFVLCIIIFIFAVMGMQLFG. Residues 964–985 are Extracellular-facing; the sequence is KNYHDHKDRFPDGDLPRWNFTD. N-linked (GlcNAc...) asparagine glycosylation is present at Asn982. Positions 986-1006 form an intramembrane region, pore-forming; that stretch reads FMHSFMIVFRVLCGEWIESMW. The Extracellular segment spans residues 1007 to 1013; that stretch reads DCMYVGD. A disulfide bridge connects residues Cys1008 and Cys1016. Residues 1014–1041 form a helical membrane-spanning segment; that stretch reads VSCIPFFLATVVIGNLVVLNLFLALLLS. The Cytoplasmic segment spans residues 1042–1296; that stretch reads NFGSSSLSAP…WGNLRLKTFQ (255 aa). The interval 1166 to 1240 is disordered; sequence DMKNNKPKKS…LDEEGECEEG (75 aa). Polar residues predominate over residues 1177 to 1194; it reads YLNNATDDDTASINSYGS. Over residues 1199–1225 the composition is skewed to basic and acidic residues; it reads PFKDESHKGSAETMEGEEKRDASKEDL. Residues 1226–1240 are compositionally biased toward acidic residues; sequence GLDEELDEEGECEEG. Residues 1284–1591 form an III repeat; that stretch reads WQGWGNLRLK…QKKYYNAMKK (308 aa). Residues 1297-1320 form a helical membrane-spanning segment; sequence LIENKYFETAVITMILMSSLALAL. Over 1321–1334 the chain is Extracellular; it reads EDVHLPQRPILQDI. The helical transmembrane segment at 1335 to 1359 threads the bilayer; that stretch reads LYYMDRIFTVIFFLEMLIKWLALGF. At 1360–1365 the chain is on the cytoplasmic side; sequence KVYFTN. Residues 1366 to 1387 form a helical membrane-spanning segment; it reads AWCWLDFVIVMVSLINFVASLV. Residues 1388–1391 are Extracellular-facing; that stretch reads GAGG. Residues 1392-1413 form a helical; Voltage-sensor membrane-spanning segment; sequence IQAFKTMRTLRALRPLRAMSRM. Topologically, residues 1414 to 1432 are cytoplasmic; that stretch reads QGMRVVVNALVQAIPSIFN. The helical transmembrane segment at 1433–1454 threads the bilayer; it reads VLLVCLIFWLIFAIMGVQLFAG. At 1455–1495 the chain is on the extracellular side; it reads KYFKCEDMNGTKLSHEIIPNRNACESENYTWVNSAMNFDHV. Asn1463 and Asn1482 each carry an N-linked (GlcNAc...) asparagine glycan. The segment at residues 1496 to 1517 is an intramembrane region (pore-forming); that stretch reads GNAYLCLFQVATFKGWIQIMND. Residues 1518–1533 are Extracellular-facing; sequence AIDSREVDKQPIRETN. Residues 1534–1560 traverse the membrane as a helical segment; the sequence is IYMYLYFVFFIIFGSFFTLNLFIGVII. Residues 1561 to 1614 are Cytoplasmic-facing; that stretch reads DNFNEQKKKAGGSLEMFMTEDQKKYYNAMKKMGSKKPLKAIPRPRWRPQAIVFE. The IV repeat unit spans residues 1601-1862; that stretch reads IPRPRWRPQA…NMYIAVILEN (262 aa). Residues 1615-1638 traverse the membrane as a helical segment; the sequence is IVTDKKFDIIIMLFIGLNMFTMTL. Topologically, residues 1639-1649 are extracellular; that stretch reads DRYDASDTYNA. A helical membrane pass occupies residues 1650-1673; sequence VLDYLNAIFVVIFSSECLLKIFAL. Residues 1674–1679 are Cytoplasmic-facing; sequence RYHYFI. The helical transmembrane segment at 1680-1703 threads the bilayer; sequence EPWNLFDVVVVILSILGLVLSDII. Topologically, residues 1704 to 1713 are extracellular; that stretch reads EKYFVSPTLL. A helical; Voltage-sensor transmembrane segment spans residues 1714-1735; the sequence is RVVRVAKVGRVLRLVKGAKGIR. The Cytoplasmic portion of the chain corresponds to 1736–1750; it reads TLLFALAMSLPALFN. Residues 1751-1773 form a helical membrane-spanning segment; the sequence is ICLLLFLVMFIFAIFGMSFFMHV. At 1774-1787 the chain is on the extracellular side; it reads KEKSGINDVYNFKT. Residues 1788–1810 constitute an intramembrane region (pore-forming); that stretch reads FGQSMILLFQMSTSAGWDGVLDA. At 1811–1835 the chain is on the extracellular side; that stretch reads IINEEACDPPDNDKGYPGNCGSATV. Residues 1836-1860 traverse the membrane as a helical segment; the sequence is GITFLLSYLVISFLIVINMYIAVIL. Residues 1861–2131 are Cytoplasmic-facing; it reads ENYSQATEDV…PSITSRTADV (271 aa). In terms of domain architecture, EF-hand spans 1877-1912; sequence DDYDMYYEIWQQFDPEGTQYIRYDQLSEFLDVLEPP. The tract at residues 2001-2096 is disordered; it reads HKARGEGGGS…GSPGAGSAGR (96 aa). The segment covering 2021-2035 has biased composition (acidic residues); sequence GDPDAGDPAPDEATD. Residues 2068-2088 show a composition bias toward low complexity; the sequence is AAAAAAAAAAAAAAGTTTAGS.

Belongs to the sodium channel (TC 1.A.1.10) family. Para subfamily.

It localises to the cell membrane. Its function is as follows. Mediates the voltage-dependent sodium ion permeability of excitable membranes. Assuming opened or closed conformations in response to the voltage difference across the membrane, the protein forms a sodium-selective channel through which Na(+) ions may pass in accordance with their electrochemical gradient. In Drosophila melanogaster (Fruit fly), this protein is Sodium channel protein para (para).